The chain runs to 386 residues: Lipoyl synthase, mitochondrial (386 aa).

[4Fe-4S] cluster-binding residues include C115, C120, C126, C146, C150, C153, and S362. Positions 131–351 (ETGTATATIM…QKLGMEMGFR (221 aa)) constitute a Radical SAM core domain.

This sequence belongs to the radical SAM superfamily. Lipoyl synthase family. Requires [4Fe-4S] cluster as cofactor.

The protein resides in the mitochondrion. It carries out the reaction [[Fe-S] cluster scaffold protein carrying a second [4Fe-4S](2+) cluster] + N(6)-octanoyl-L-lysyl-[protein] + 2 oxidized [2Fe-2S]-[ferredoxin] + 2 S-adenosyl-L-methionine + 4 H(+) = [[Fe-S] cluster scaffold protein] + N(6)-[(R)-dihydrolipoyl]-L-lysyl-[protein] + 4 Fe(3+) + 2 hydrogen sulfide + 2 5'-deoxyadenosine + 2 L-methionine + 2 reduced [2Fe-2S]-[ferredoxin]. Its pathway is protein modification; protein lipoylation via endogenous pathway; protein N(6)-(lipoyl)lysine from octanoyl-[acyl-carrier-protein]: step 2/2. Its function is as follows. Catalyzes the radical-mediated insertion of two sulfur atoms into the C-6 and C-8 positions of the octanoyl moiety bound to the lipoyl domains of lipoate-dependent enzymes, thereby converting the octanoylated domains into lipoylated derivatives. This Picea sitchensis (Sitka spruce) protein is Lipoyl synthase, mitochondrial.